The chain runs to 466 residues: MSLSTHYHAHKPNVPIIMEDVFGWVREGNAFQVRVWLDDHEHDLNVGDDHAFSLLHWAAKGGHVAIAEMLLSRGARVNSTNMGDDTSLHLAAAHGHRQIVVKLLSRKADVNATNEHGMTPLHYACFWGYEQIAEDLISCGAAVNVCNKKGMTPLDVCQPMCKNTILEIAQEHGQSPNDRVPFKDTTWKGTKSRTRDATLSRYTGVDVSSLNLITKIAESHSGELWRGKWQGNDIVARILNVQEVTARISRDFQTEFPALRIFAHPNICAVLAAANQPPNLVIISQYMPFGSLYNVLHEQSSVVIDHGQAVRFALDIARGMSYLHSLDPMLLRFYLSSKHVVVDEELTAKLSMADTKFSFQEVGKAYSPAWMSPEALSRAPEDLNIRAADMWSFAILLWELNTREVPFSDLPPMECGMKIALEGLRVHIPPGIARNMNRLMNICMNEDPGRRPNFDQIIPILERMIL.

ANK repeat units lie at residues 50–79 (HAFS…RVNS), 83–112 (GDDT…DVNA), and 116–145 (HGMT…AVNV). Residues 210-465 (LNLITKIAES…QIIPILERMI (256 aa)) form the Protein kinase domain.

It belongs to the protein kinase superfamily. TKL Ser/Thr protein kinase family. As to quaternary structure, interacts (via protein kinase domain) with unc-112 (via N-terminus). Interacts (via ANK repeats) with unc-97 (via first LIM domain). Interacts (via protein kinase domain) with pat-6 (via C-terminus CH domain). May form a complex with unc-112, unc-97 and pat-6. Does not interact with integrin pat-3. Component of an integrin containing attachment complex, composed of at least pat-2, pat-3, pat-4, pat-6, unc-52, unc-97 and unc-112. As to expression, expressed in body wall muscle.

The protein resides in the cytoplasm. The protein localises to the myofibril. It is found in the sarcomere. It localises to the m line. Its subcellular location is the basal cell membrane. Probable pseudokinase that acts as an adapter protein. Component of an integrin containing attachment complex, which is required for muscle development and maintenance. Involved in the assembly of dense bodies and M lines during body wall muscle development by recruiting several of their components including integrin pat-3, cpna-1, unc-89 and unc-112 to integrin-mediated attachment sites. Plays a role in distal tip cell (DTC) migration and in oocyte development probably by regulating the actin cytoskeleton. During the formation of neuromuscular junctions at the larval stage, negatively regulates membrane protrusion from body wall muscles. May be involved in thermotolerance and lifespan. The protein is Integrin-linked protein kinase homolog pat-4 of Caenorhabditis elegans.